The chain runs to 501 residues: uncharacterized protein (501 aa).

It belongs to the UbiD family.

This is an uncharacterized protein from Synechocystis sp. (strain ATCC 27184 / PCC 6803 / Kazusa).